A 102-amino-acid polypeptide reads, in one-letter code: Urease subunit beta (102 aa).

This sequence belongs to the urease beta subunit family. Heterotrimer of UreA (gamma), UreB (beta) and UreC (alpha) subunits. Three heterotrimers associate to form the active enzyme.

The protein localises to the cytoplasm. The catalysed reaction is urea + 2 H2O + H(+) = hydrogencarbonate + 2 NH4(+). The protein operates within nitrogen metabolism; urea degradation; CO(2) and NH(3) from urea (urease route): step 1/1. In Pseudomonas syringae pv. tomato (strain ATCC BAA-871 / DC3000), this protein is Urease subunit beta.